The chain runs to 508 residues: MEEFQGYLELDRSRQHDFLYPLIFREYIYGLAHGHGLNRSGFLLLDNVDYDNKYSFLIVKRLIARMYQQNHFHICENDSALNQFIGHNKNLYSQMISEGFADIVEISLFIQLVSYLDGKATSKSLNLRSIHSIFPFLEDECSHLNYASDILIPHPTHLEILVEVLRYSVKDASFLHFLRFLLYEYWSWKSLSIKKKASSIVSKKNERFFVFLYNSHVCEYESILLFLRNQSSHLRSTSFGILLERIFFYKKIGGLVAIFGTPFEHIHILRFLKDPLIHYVRYQGKSILISKDRPLLMNKWKYYLVKLWQCHFYVWSQPGRIHINQLSQHSLHLLGYLLSVGTNPLVVRSQVFDNSFLIDNAMNKLETRIPLFSLIGSLTKAQFCNPLGQPISKSTWADSSDSDIIDRFVRMCRNLSHYYSGSSKKQSLYRLKYILRLSCVKTLARKHKSTVRAFLKKLGSELLEEFIKEEEQVLSLLFPRALSASRRLSTGRIWYFDILCINDLANHE.

The protein belongs to the intron maturase 2 family. MatK subfamily.

It is found in the plastid. Its subcellular location is the chloroplast. In terms of biological role, usually encoded in the trnK tRNA gene intron. Probably assists in splicing its own and other chloroplast group II introns. In Pelargonium hortorum (Common geranium), this protein is Maturase K.